The sequence spans 265 residues: GTP cyclohydrolase FolE2 (265 aa).

This sequence belongs to the GTP cyclohydrolase IV family.

It carries out the reaction GTP + H2O = 7,8-dihydroneopterin 3'-triphosphate + formate + H(+). The protein operates within cofactor biosynthesis; 7,8-dihydroneopterin triphosphate biosynthesis; 7,8-dihydroneopterin triphosphate from GTP: step 1/1. Its function is as follows. Converts GTP to 7,8-dihydroneopterin triphosphate. This is GTP cyclohydrolase FolE2 from Bordetella avium (strain 197N).